Reading from the N-terminus, the 163-residue chain is Arginine repressor (163 aa).

It belongs to the ArgR family.

The protein localises to the cytoplasm. The protein operates within amino-acid biosynthesis; L-arginine biosynthesis [regulation]. Functionally, regulates arginine biosynthesis genes. The sequence is that of Arginine repressor from Anaeromyxobacter dehalogenans (strain 2CP-C).